The primary structure comprises 529 residues: Type I inositol polyphosphate 5-phosphatase 5 (529 aa).

2 catalytic regions span residues 371-386 and 451-466; these read DRVLWLGDLNYRVALT and KRRTPAWCDRILWKGE.

This sequence belongs to the inositol polyphosphate 5-phosphatase family.

In terms of biological role, may be involved in the regulation of root hairs development. Required for restricting both the size of the root-hair initiation site and the width of the root hairs during the transition to tip growth, but is not required for normal subsequent tip growth. The polypeptide is Type I inositol polyphosphate 5-phosphatase 5 (Arabidopsis thaliana (Mouse-ear cress)).